Reading from the N-terminus, the 598-residue chain is Vanadium-dependent bromoperoxidase (598 aa).

Positions 361, 363, 365, 368, and 370 each coordinate Ca(2+). Residues Lys-400 and Arg-408 each coordinate vanadate. Residue His-480 is part of the active site. Residues Ser-485, Gly-486, His-487, Arg-547, and His-553 each contribute to the vanadate site. His-487 is an active-site residue.

The protein belongs to the vanadium-dependent haloperoxidase family. As to quaternary structure, homododecamer. The cofactor is Ca(2+). Vanadate is required as a cofactor.

The catalysed reaction is RH + Br(-) + H2O2 = RBr + 2 H2O.. Catalyzes the halogenation of organic substrates in the presence of hydrogen peroxide. The sequence is that of Vanadium-dependent bromoperoxidase from Corallina pilulifera (Red coralline alga).